We begin with the raw amino-acid sequence, 197 residues long: Xanthine phosphoribosyltransferase (197 aa).

Positions 20 and 27 each coordinate xanthine. 128 to 132 (ANGQA) serves as a coordination point for 5-phospho-alpha-D-ribose 1-diphosphate. A xanthine-binding site is contributed by Lys-156.

The protein belongs to the purine/pyrimidine phosphoribosyltransferase family. Xpt subfamily. As to quaternary structure, homodimer.

The protein resides in the cytoplasm. The enzyme catalyses XMP + diphosphate = xanthine + 5-phospho-alpha-D-ribose 1-diphosphate. Its pathway is purine metabolism; XMP biosynthesis via salvage pathway; XMP from xanthine: step 1/1. In terms of biological role, converts the preformed base xanthine, a product of nucleic acid breakdown, to xanthosine 5'-monophosphate (XMP), so it can be reused for RNA or DNA synthesis. In Bacillus cereus (strain ZK / E33L), this protein is Xanthine phosphoribosyltransferase.